The chain runs to 87 residues: Small ribosomal subunit protein bS20 (87 aa).

The protein belongs to the bacterial ribosomal protein bS20 family.

Binds directly to 16S ribosomal RNA. This chain is Small ribosomal subunit protein bS20, found in Neorickettsia sennetsu (strain ATCC VR-367 / Miyayama) (Ehrlichia sennetsu).